We begin with the raw amino-acid sequence, 86 residues long: Small ribosomal subunit protein bS16 (86 aa).

It belongs to the bacterial ribosomal protein bS16 family.

In Leptothrix cholodnii (strain ATCC 51168 / LMG 8142 / SP-6) (Leptothrix discophora (strain SP-6)), this protein is Small ribosomal subunit protein bS16.